The primary structure comprises 130 residues: Small ribosomal subunit protein uS8 (130 aa).

It belongs to the universal ribosomal protein uS8 family. Part of the 30S ribosomal subunit. Contacts proteins S5 and S12.

One of the primary rRNA binding proteins, it binds directly to 16S rRNA central domain where it helps coordinate assembly of the platform of the 30S subunit. This Buchnera aphidicola subsp. Acyrthosiphon pisum (strain 5A) protein is Small ribosomal subunit protein uS8.